The sequence spans 793 residues: ClpA homolog protein (793 aa).

The segment at 1–24 (MRPRSNAGSSPPDPEEQEHAQVPS) is disordered. The region spanning 22 to 168 (VPSFSSTLEQ…NFIAHGVAKD (147 aa)) is the Clp R domain. Repeat regions lie at residues 25 to 88 (FSST…IDDD) and 103 to 168 (PTAA…VAKD). Residues 169 to 194 (PSYGESRPVQGADEPQETPKAEAGEA) are disordered. Residues 185–194 (ETPKAEAGEA) show a composition bias toward basic and acidic residues. The interval 199–447 (LSKYCVDLNI…AQHLVSDSKR (249 aa)) is i. ATP is bound by residues 244-251 (GDPGVGKT) and 525-532 (GPTGVGKT). The segment at 451–639 (LGTKEIEAVV…ILIMTSNVGA (189 aa)) is II.

The protein belongs to the ClpA/ClpB family.

This chain is ClpA homolog protein, found in Fuscovulum blasticum (Rhodobacter blasticus).